The primary structure comprises 221 residues: NEDD4 family-interacting protein 1 (221 aa).

Residue alanine 2 is modified to N-acetylalanine. The interaction with UBE2L3 stretch occupies residues 2–41; that stretch reads ALALAALAAVEPACGSRYQQLQNEEESGEPEQAAGDAPPP. At 2–116 the chain is on the cytoplasmic side; the sequence is ALALAALAAV…ADQLRIGNDG (115 aa). Positions 18–45 are disordered; it reads RYQQLQNEEESGEPEQAAGDAPPPYSSI. 3 consecutive short sequence motifs (PPxY motif) follow at residues 39–42, 64–67, and 74–76; these read PPPY, PPSY, and PSY. The interval 42–76 is interaction with ITCH; it reads YSSISAESAAYFDYKDESGFPKPPSYNVATTLPSY. A helical transmembrane segment spans residues 117–137; it reads IFMLTFFMAFLFNWIGFFLSF. Residues 138–143 are Extracellular-facing; sequence CLTTSA. The chain crosses the membrane as a helical span at residues 144–164; sequence AGRYGAISGFGLSLIKWILIV. The Cytoplasmic portion of the chain corresponds to 165-172; sequence RFSTYFPG. The helical transmembrane segment at 173–193 threads the bilayer; it reads YFDGQYWLWWVFLVLGFLLFL. Residues 194–221 lie on the Extracellular side of the membrane; it reads RGFINYAKVRKMPETFSNLPRTRVLFIY.

As to quaternary structure, forms heterodimers with NDFIP2. Interacts with several E3 ubiquitin-protein ligases, including ITCH, NEDD4, NEDD4L and WWP2. The interaction with NEDD4, NEDD4L and ITCH leads to relocalization of these proteins to exosomes and eventually to exosomal secretion. Interacts with U2SURP. Interacts with SLC11A2/DMT1. Interacts with PTEN. May interact with phosphorylated EGFR. Interacts with BRAT1. Interacts with KCNH2. Interacts with MAVS. Part of a complex containing ITCH, NDFIP1 and MAP3K7. Interacts (via N-terminus) with UBE2L3; the interaction mediates recruitment of UBE2L3 to ITCH. Ubiquitinated by NEDD4 and ITCH; mono-, di- and polyubiquitinated forms are detected. Ubiquitination regulates its degradation. In terms of processing, undergoes transient tyrosine phosphorylation following EGF stimulation, most probably by catalyzed by SRC. Phosphorylation SRC is enhanced in the presence of NDFIP2 which may act as a scaffold to recruit SRC to NDFIP1. Widely expressed. Higher levels are detected in cerebellum, pituitary, thalamus, kidney, liver, testis, salivary glands and placenta. Also expressed in fetal brain, kidney and lung.

The protein resides in the endosome membrane. It localises to the golgi apparatus membrane. The protein localises to the synapse. Its subcellular location is the synaptosome. It is found in the cell projection. The protein resides in the dendrite. It localises to the secreted. Its function is as follows. Activates HECT domain-containing E3 ubiquitin-protein ligases, including NEDD4 and ITCH, and consequently modulates the stability of their targets. As a result, controls many cellular processes. Prevents chronic T-helper cell-mediated inflammation by activating ITCH and thus controlling JUNB degradation. Promotes pancreatic beta cell death through degradation of JUNB and inhibition of the unfolded protein response, leading to reduction of insulin secretion. Restricts the production of pro-inflammatory cytokines in effector Th17 T-cells by promoting ITCH-mediated ubiquitination and degradation of RORC. Together with NDFIP2, limits the cytokine signaling and expansion of effector Th2 T-cells by promoting degradation of JAK1, probably by ITCH- and NEDD4L-mediated ubiquitination. Regulates peripheral T-cell tolerance to self and foreign antigens, forcing the exit of naive CD4+ T-cells from the cell cycle before they become effector T-cells. Negatively regulates RLR-mediated antiviral response by promoting SMURF1-mediated ubiquitination and subsequent degradation of MAVS. Negatively regulates KCNH2 potassium channel activity by decreasing its cell-surface expression and interfering with channel maturation through recruitment of NEDD4L to the Golgi apparatus where it mediates KCNH2 degradation. In cortical neurons, mediates the ubiquitination of the divalent metal transporter SLC11A2/DMT1 by NEDD4L, leading to its down-regulation and protection of the cells from cobalt and iron toxicity. Important for normal development of dendrites and dendritic spines in cortex. Enhances the ubiquitination of BRAT1 mediated by: NEDD4, NEDD4L and ITCH and is required for the nuclear localization of ubiquitinated BRAT1. Enhances the ITCH-mediated ubiquitination of MAP3K7 by recruiting E2 ubiquitin-conjugating enzyme UBE2L3 to ITCH. Modulates EGFR signaling through multiple pathways. In particular, may regulate the ratio of AKT1-to-MAPK8 signaling in response to EGF, acting on AKT1 probably through PTEN destabilization and on MAPK8 through ITCH-dependent MAP2K4 inactivation. As a result, may control cell growth rate. Inhibits cell proliferation by promoting PTEN nuclear localization and changing its signaling specificity. This is NEDD4 family-interacting protein 1 (NDFIP1) from Homo sapiens (Human).